A 360-amino-acid polypeptide reads, in one-letter code: Phosphoserine aminotransferase (360 aa).

An L-glutamate-binding site is contributed by Arg-41. Pyridoxal 5'-phosphate is bound by residues 75-76 (GR), Trp-101, Thr-152, Asp-172, and Gln-195. Lys-196 is subject to N6-(pyridoxal phosphate)lysine. 237-238 (NT) contacts pyridoxal 5'-phosphate.

Belongs to the class-V pyridoxal-phosphate-dependent aminotransferase family. SerC subfamily. Homodimer. The cofactor is pyridoxal 5'-phosphate.

The protein resides in the cytoplasm. It catalyses the reaction O-phospho-L-serine + 2-oxoglutarate = 3-phosphooxypyruvate + L-glutamate. The catalysed reaction is 4-(phosphooxy)-L-threonine + 2-oxoglutarate = (R)-3-hydroxy-2-oxo-4-phosphooxybutanoate + L-glutamate. It participates in amino-acid biosynthesis; L-serine biosynthesis; L-serine from 3-phospho-D-glycerate: step 2/3. It functions in the pathway cofactor biosynthesis; pyridoxine 5'-phosphate biosynthesis; pyridoxine 5'-phosphate from D-erythrose 4-phosphate: step 3/5. Catalyzes the reversible conversion of 3-phosphohydroxypyruvate to phosphoserine and of 3-hydroxy-2-oxo-4-phosphonooxybutanoate to phosphohydroxythreonine. This Pseudoalteromonas translucida (strain TAC 125) protein is Phosphoserine aminotransferase.